The chain runs to 139 residues: Putative pre-16S rRNA nuclease (139 aa).

It belongs to the YqgF nuclease family.

It localises to the cytoplasm. Could be a nuclease involved in processing of the 5'-end of pre-16S rRNA. The protein is Putative pre-16S rRNA nuclease of Streptococcus thermophilus (strain CNRZ 1066).